The following is a 381-amino-acid chain: Cytochrome b (381 aa).

Transmembrane regions (helical) follow at residues 33-53 (FGSLLGICLIIQILTGLFLAM), 77-98 (WLLRNLHANGASMFFMCLFLHV), 113-133 (WNIGVILLLTVMATAFVGYVL), and 178-198 (FFAFHFILPFIITALAVVHLL). The heme b site is built by His-83 and His-97. Heme b is bound by residues His-182 and His-196. His-201 contributes to the a ubiquinone binding site. 4 helical membrane passes run 226-246 (IKDALGLMLLLLMLLLLALFS), 288-308 (LGGVLALLASILILLIIPLLH), 320-340 (ISQTLFWILTANLITLTWIGG), and 347-367 (FIIIGQLAPMLYFLLILVLMP).

This sequence belongs to the cytochrome b family. As to quaternary structure, the cytochrome bc1 complex contains 11 subunits: 3 respiratory subunits (MT-CYB, CYC1 and UQCRFS1), 2 core proteins (UQCRC1 and UQCRC2) and 6 low-molecular weight proteins (UQCRH/QCR6, UQCRB/QCR7, UQCRQ/QCR8, UQCR10/QCR9, UQCR11/QCR10 and a cleavage product of UQCRFS1). This cytochrome bc1 complex then forms a dimer. The cofactor is heme b.

It is found in the mitochondrion inner membrane. Its function is as follows. Component of the ubiquinol-cytochrome c reductase complex (complex III or cytochrome b-c1 complex) that is part of the mitochondrial respiratory chain. The b-c1 complex mediates electron transfer from ubiquinol to cytochrome c. Contributes to the generation of a proton gradient across the mitochondrial membrane that is then used for ATP synthesis. The protein is Cytochrome b (MT-CYB) of Pseudantechinus bilarni (Sandstone dibbler).